A 63-amino-acid polypeptide reads, in one-letter code: MARKCEICNKGVVAGVQYSHSHRQSKRTWAPNIKKVKAIVKGTPKTVHVCTRCLRSGKVQRAI.

This sequence belongs to the bacterial ribosomal protein bL28 family.

This Clostridium perfringens (strain SM101 / Type A) protein is Large ribosomal subunit protein bL28.